We begin with the raw amino-acid sequence, 324 residues long: Aldo-keto reductase family 1 member A1-A (324 aa).

NADP(+)-binding positions include 10 to 19 (GQRMPTVGLG), threonine 20, tryptophan 21, and aspartate 44. The active-site Proton donor is tyrosine 49. The NADP(+) site is built by serine 161, asparagine 162, serine 210, leucine 212, serine 214, lysine 262, serine 263, valine 264, threonine 265, arginine 268, glutamine 271, and asparagine 272.

The protein belongs to the aldo/keto reductase family.

Its subcellular location is the cytoplasm. It is found in the cytosol. The protein resides in the apical cell membrane. The enzyme catalyses a primary alcohol + NADP(+) = an aldehyde + NADPH + H(+). It catalyses the reaction S-nitroso-CoA + NADPH + H(+) = sulfinamide-CoA + NADP(+). The catalysed reaction is S-nitrosoglutathione + NADPH + H(+) = S-(hydroxysulfenamide)glutathione + NADP(+). Catalyzes the NADPH-dependent reduction of a wide variety of carbonyl-containing compounds to their corresponding alcohols. Displays enzymatic activity towards endogenous metabolites such as aromatic and aliphatic aldehydes, ketones, monosaccharides and bile acids. Acts as an aldehyde-detoxification enzyme. Also acts as an inhibitor of protein S-nitrosylation by mediating degradation of S-nitroso-coenzyme A (S-nitroso-CoA), a cofactor required to S-nitrosylate proteins. Also acts as a S-nitroso-glutathione reductase by catalyzing the NADPH-dependent reduction of S-nitrosoglutathione. Displays no reductase activity towards retinoids. The sequence is that of Aldo-keto reductase family 1 member A1-A (akr1a1a) from Danio rerio (Zebrafish).